We begin with the raw amino-acid sequence, 1433 residues long: Regulatory protein CAT8 (1433 aa).

The span at 20 to 38 (GSQALSGPSISNRTSSSEA) shows a compositional bias: polar residues. Residues 20 to 40 (GSQALSGPSISNRTSSSEANP) form a disordered region. Residues 70 to 97 (CDRCRSKKTRCDGKRPQCSQCAAVGFEC) constitute a DNA-binding region (zn(2)-C6 fungal-type). Residues 936 to 946 (KPLFGSQSKNS) are compositionally biased toward polar residues. Disordered regions lie at residues 936-1024 (KPLF…DTKK), 1137-1162 (QNPENSKNNQFHQKGKSTNMEKNNLS), 1200-1236 (SASADPGTNKKAVTNAGANFKPPSTGSNTSQGSILGS), and 1324-1433 (LNPT…QNAK). Basic and acidic residues-rich tracts occupy residues 947 to 965 (LENRQRTPNVKRENPEHEY) and 994 to 1005 (LKYEKDAKRNAK). Composition is skewed to polar residues over residues 1138–1162 (NPENSKNNQFHQKGKSTNMEKNNLS), 1221–1235 (PPSTGSNTSQGSILG), and 1326–1348 (PTDSILSQGMVSSVSTRNTSNQR). Residues 1349 to 1362 (SLSSGNDSKGDSSS) are compositionally biased toward low complexity. 2 stretches are compositionally biased toward polar residues: residues 1363 to 1391 (QENSKSATGNQLDTPSTLFQMRRTSSGPS) and 1418 to 1433 (SNTDNVSDLFQWQNAK).

Could be the target of the SNF1/CAT1 - SNF4/CAT3 kinase complex.

Its subcellular location is the nucleus. Its function is as follows. Activator of the gluconeogenic enzymes FBP1 and PCK1 genes. The sequence is that of Regulatory protein CAT8 (CAT8) from Saccharomyces cerevisiae (strain ATCC 204508 / S288c) (Baker's yeast).